Here is a 1302-residue protein sequence, read N- to C-terminus: Serine-enriched protein (1302 aa).

The region spanning 40-158 is the BTB domain; it reads CDVTFLVGDT…IHTGCVTLQP (119 aa). 8 disordered regions span residues 325–532, 575–624, 648–685, 701–752, 834–858, 1045–1090, 1102–1163, and 1187–1252; these read SIDP…RSPT, PIPP…SVMR, FTRAESGSSGGPLIRQSTFSASPAASSTAAKSAVQKQM, YAKM…SSDE, FTRRSESREPIEPRISEERESDSND, FQRS…RTEN, FSRA…GEEE, and VLTQ…SASP. Residues 337-364 show a composition bias toward basic residues; sequence RQHHRHRHHHQSLPKIRKAKSQSFRTRR. Polar residues-rich tracts occupy residues 378–388, 410–430, 437–449, and 472–487; these read LTLNTSLTSGN, SPGSSSQKTPTSLSRQGTLRA, SGQLSISLGTQGR, and GLRSPNDPMTSPTVRS. Residues 589–623 show a composition bias toward basic and acidic residues; sequence KSAEREREAAEAAAREKEKEKEKEAAQPQEKKSVM. Residues 664-680 show a composition bias toward low complexity; the sequence is STFSASPAASSTAAKSA. The segment covering 713–723 has biased composition (basic and acidic residues); it reads KRDDEEKEKQK. The segment covering 736-748 has biased composition (polar residues); sequence DLSQTNADQQVGG. The span at 836 to 855 shows a compositional bias: basic and acidic residues; it reads RRSESREPIEPRISEERESD. Composition is skewed to low complexity over residues 1047–1056 and 1107–1128; these read RSGSSCGGRK and SPLSQQTSSNYSSRDSYDSSGS. The segment covering 1187–1207 has biased composition (polar residues); that stretch reads VLTQQLSTGSMSTPSGYTNGT. Residues 1226-1252 show a composition bias toward low complexity; the sequence is APLSSCGFSSGSEFEPPSPRRAASASP.

The chain is Serine-enriched protein (gprs) from Drosophila melanogaster (Fruit fly).